Here is a 369-residue protein sequence, read N- to C-terminus: MSGYIPSYLDKDELCVVCGDKATGYHYRCITCEGCKGFFRRTIQKNLHPTYSCKYEGKCVIDKVTRNQCQECRFKKCIFVGMATDLVLDDSKRLAKRKLIEENREKRRREELQKTIGHKPEPTDEEWELIKIVTEAHVATNAQGSHWKQKRKFLPEDIGQAPIVNAPEGGKVDLEAFSQFTKIITPAITRVVDFAKKLPMFCELPCEDQIILLKGCCMEIMSLRAAVRYDPESETLTLNGEMAVTRGQLKNGGLGVVSDAIFDLGMSLSSFNLDDTEVALLQAVLLMSSDRPGLVCVERIEKCQEGFLLAFEHYINYRKHHVAHFWPKLLMKVTDLRMIGACHASRFLHMKVECPTELFPPLFLEVFED.

Residues 1-14 (MSGYIPSYLDKDEL) form a modulating region. Residues Cys-15, Cys-18, Cys-32, Cys-35, Cys-53, Cys-59, Cys-69, and Cys-72 each coordinate Zn(2+). 2 consecutive NR C4-type zinc fingers follow at residues 15 to 35 (CVVCGDKATGYHYRCITCEGC) and 53 to 77 (CKYEGKCVIDKVTRNQCQECRFKKC). Positions 15–89 (CVVCGDKATG…VGMATDLVLD (75 aa)) form a DNA-binding region, nuclear receptor. The 245-residue stretch at 125–369 (EEWELIKIVT…PPLFLEVFED (245 aa)) folds into the NR LBD domain. Arg-190, Asn-239, and His-343 together coordinate 3,3',5-triiodo-L-thyronine. L-thyroxine is bound by residues Arg-190, Asn-239, and His-343.

It belongs to the nuclear hormone receptor family. NR1 subfamily.

The protein localises to the nucleus. Functionally, nuclear hormone receptor that can act as a repressor or activator of transcription. High affinity receptor for thyroid hormones, including triiodothyronine and thyroxine. This Cairina moschata (Muscovy duck) protein is Thyroid hormone receptor beta (THRB).